A 795-amino-acid chain; its full sequence is Volume-regulated anion channel subunit LRRC8E (795 aa).

The Cytoplasmic segment spans residues 1–22 (MIPVAEFKQFTEQQPAFKVLKP). The helical transmembrane segment at 23 to 43 (WWDVLAEYLTVAMLMIGVFGC) threads the bilayer. The Extracellular segment spans residues 44–116 (TLQVTQDKII…YETALHWYAK (73 aa)). Residues cysteine 54 and cysteine 300 are joined by a disulfide bond. The N-linked (GlcNAc...) asparagine glycan is linked to asparagine 63. A helical membrane pass occupies residues 117-137 (YFPYLVVIHTLIFMVCTSFWF). The Cytoplasmic segment spans residues 138-264 (KFPGTSSKIE…IRQTVLKVCK (127 aa)). Residues 265–285 (FFAILVYNLIYVEKISFLVAC) traverse the membrane as a helical segment. Residues 286 to 312 (RVETSEITGYASFCCNHTKAHLFSKLA) lie on the Extracellular side of the membrane. A glycan (N-linked (GlcNAc...) asparagine) is linked at asparagine 301. Residues 313–333 (FCYISFVCVYGITCLYTLYWL) form a helical membrane-spanning segment. Topologically, residues 334–795 (FHRPLKEYSF…AEVREKMEEE (462 aa)) are cytoplasmic. LRR repeat units lie at residues 535–556 (QLKVLSLRSNAGKVPASVTDVA), 558–578 (HLQRLSLHNDGARLLALNSLK), 582–603 (VLRELELVACGLERIPHAIFSL), 605–626 (ALQELDLKDNHLRSIEEILSFQ), 630–651 (KLVTLRLWHNQIAYVPEHVRKL), 653–674 (SLEQLYLSHNKLETLPTQLGQC), 676–697 (GLRLLDLSHNGLRSLPPELGLL), 699–720 (SLQHLALSYNALESLPDELFFC), 722–744 (KLRTLLLGYNHLTQLSPDVAALQ), and 745–766 (ALSRLELKGNRLETLPEELGDC).

It belongs to the LRRC8 family. In terms of assembly, heterohexamer; oligomerizes with other LRRC8 proteins (LRRC8A, LRRC8C, LRRC8D and/or LRRC8B) to form a heterohexamer. In vivo, the subunit composition may depend primarily on expression levels, and heterooligomeric channels containing various proportions of the different LRRC8 proteins may coexist.

Its subcellular location is the cell membrane. The protein resides in the endoplasmic reticulum membrane. It localises to the lysosome membrane. It catalyses the reaction chloride(in) = chloride(out). The enzyme catalyses iodide(out) = iodide(in). The catalysed reaction is taurine(out) = taurine(in). It carries out the reaction 2',3'-cGAMP(out) = 2',3'-cGAMP(in). Its function is as follows. Non-essential component of the volume-regulated anion channel (VRAC, also named VSOAC channel), an anion channel required to maintain a constant cell volume in response to extracellular or intracellular osmotic changes. The VRAC channel conducts iodide better than chloride and can also conduct organic osmolytes like taurine. Mediates efflux of amino acids, such as aspartate, in response to osmotic stress. The VRAC channel also mediates transport of immunoreactive cyclic dinucleotide GMP-AMP (2'-3'-cGAMP), an immune messenger produced in response to DNA virus in the cytosol. Channel activity requires LRRC8A plus at least one other family member (LRRC8B, LRRC8C, LRRC8D or LRRC8E); channel characteristics depend on the precise subunit composition. Also plays a role in lysosome homeostasis by forming functional lysosomal VRAC channels in response to low cytoplasmic ionic strength condition: lysosomal VRAC channels are necessary for the formation of large lysosome-derived vacuoles, which store and then expel excess water to maintain cytosolic water homeostasis. This Mus musculus (Mouse) protein is Volume-regulated anion channel subunit LRRC8E.